Consider the following 541-residue polypeptide: Chaperonin GroEL (541 aa).

ATP is bound by residues threonine 29–proline 32, aspartate 86–threonine 90, glycine 413, asparagine 476–alanine 478, and aspartate 492. The tract at residues lysine 521–methionine 541 is disordered. Low complexity predominate over residues asparagine 525–proline 535.

It belongs to the chaperonin (HSP60) family. Forms a cylinder of 14 subunits composed of two heptameric rings stacked back-to-back. Interacts with the co-chaperonin GroES.

The protein resides in the cytoplasm. It carries out the reaction ATP + H2O + a folded polypeptide = ADP + phosphate + an unfolded polypeptide.. Functionally, together with its co-chaperonin GroES, plays an essential role in assisting protein folding. The GroEL-GroES system forms a nano-cage that allows encapsulation of the non-native substrate proteins and provides a physical environment optimized to promote and accelerate protein folding. This chain is Chaperonin GroEL, found in Lactiplantibacillus plantarum (strain ATCC BAA-793 / NCIMB 8826 / WCFS1) (Lactobacillus plantarum).